Here is a 60-residue protein sequence, read N- to C-terminus: Potassium channel toxin alpha-KTx 29.1 (60 aa).

Positions 1–28 (MKSVCGVLIILVVLTTMLSISTFSTVGA) are cleaved as a signal peptide. Intrachain disulfides connect Cys-32-Cys-51, Cys-40-Cys-56, and Cys-44-Cys-58.

This sequence belongs to the short scorpion toxin superfamily. Potassium channel inhibitor family. Alpha-KTx 29 subfamily. In terms of tissue distribution, expressed by the venom gland.

It localises to the secreted. Functionally, weakly inhibits the Kv1.3/KCNA3 channel (1 uM of the toxin inhibits currents by 13.2%) and Kv7.1/KCNQ1 channel (10 uM of the toxin inhibits currents by 27.7%). The polypeptide is Potassium channel toxin alpha-KTx 29.1 (Lychas mucronatus (Chinese swimming scorpion)).